The following is a 782-amino-acid chain: Translation initiation factor IF-2 (782 aa).

The interval 47-196 is disordered; the sequence is DNAIDGTNKK…TPPKPKELPE (150 aa). Basic and acidic residues predominate over residues 53-65; sequence TNKKAEAPKKETT. The span at 66 to 81 shows a compositional bias: polar residues; the sequence is SNENGNSKGPNKPNMT. Low complexity-rich tracts occupy residues 82–93 and 118–170; these read NSNEKSNKPNNP and NTSK…NNKG. Residues 283–452 form the tr-type G domain; sequence ERPPVVTIMG…LLVSEVEELK (170 aa). Residues 292 to 299 form a G1 region; the sequence is GHVDHGKT. 292-299 is a binding site for GTP; the sequence is GHVDHGKT. Residues 317–321 form a G2 region; it reads GITQH. Residues 338–341 form a G3 region; it reads DTPG. GTP contacts are provided by residues 338–342 and 392–395; these read DTPGH and NKID. The interval 392-395 is G4; the sequence is NKID. A G5 region spans residues 428-430; that stretch reads SAK.

It belongs to the TRAFAC class translation factor GTPase superfamily. Classic translation factor GTPase family. IF-2 subfamily.

Its subcellular location is the cytoplasm. Functionally, one of the essential components for the initiation of protein synthesis. Protects formylmethionyl-tRNA from spontaneous hydrolysis and promotes its binding to the 30S ribosomal subunits. Also involved in the hydrolysis of GTP during the formation of the 70S ribosomal complex. The chain is Translation initiation factor IF-2 from Listeria monocytogenes serotype 4b (strain CLIP80459).